The following is a 459-amino-acid chain: Bifunctional protein GlmU (459 aa).

A pyrophosphorylase region spans residues 1–230 (MSNRFAVILA…FDETLGVNDR (230 aa)). Residues 9 to 12 (LAAG), lysine 23, glutamine 73, and 78 to 79 (GT) each bind UDP-N-acetyl-alpha-D-glucosamine. A Mg(2+)-binding site is contributed by aspartate 103. UDP-N-acetyl-alpha-D-glucosamine is bound by residues glycine 140, glutamate 155, asparagine 170, and asparagine 228. Asparagine 228 is a Mg(2+) binding site. The segment at 231–251 (VALSQAEVIMKNRINHKNMVN) is linker. The interval 252-459 (GVTIIDPSNT…VDQLLNKKKS (208 aa)) is N-acetyltransferase. Arginine 333 and lysine 351 together coordinate UDP-N-acetyl-alpha-D-glucosamine. Histidine 363 functions as the Proton acceptor in the catalytic mechanism. UDP-N-acetyl-alpha-D-glucosamine contacts are provided by tyrosine 366 and asparagine 377. Acetyl-CoA contacts are provided by residues 386–387 (NY), alanine 423, and arginine 440.

This sequence in the N-terminal section; belongs to the N-acetylglucosamine-1-phosphate uridyltransferase family. It in the C-terminal section; belongs to the transferase hexapeptide repeat family. As to quaternary structure, homotrimer. It depends on Mg(2+) as a cofactor.

It is found in the cytoplasm. It catalyses the reaction alpha-D-glucosamine 1-phosphate + acetyl-CoA = N-acetyl-alpha-D-glucosamine 1-phosphate + CoA + H(+). The enzyme catalyses N-acetyl-alpha-D-glucosamine 1-phosphate + UTP + H(+) = UDP-N-acetyl-alpha-D-glucosamine + diphosphate. Its pathway is nucleotide-sugar biosynthesis; UDP-N-acetyl-alpha-D-glucosamine biosynthesis; N-acetyl-alpha-D-glucosamine 1-phosphate from alpha-D-glucosamine 6-phosphate (route II): step 2/2. The protein operates within nucleotide-sugar biosynthesis; UDP-N-acetyl-alpha-D-glucosamine biosynthesis; UDP-N-acetyl-alpha-D-glucosamine from N-acetyl-alpha-D-glucosamine 1-phosphate: step 1/1. It functions in the pathway bacterial outer membrane biogenesis; LPS lipid A biosynthesis. Its function is as follows. Catalyzes the last two sequential reactions in the de novo biosynthetic pathway for UDP-N-acetylglucosamine (UDP-GlcNAc). The C-terminal domain catalyzes the transfer of acetyl group from acetyl coenzyme A to glucosamine-1-phosphate (GlcN-1-P) to produce N-acetylglucosamine-1-phosphate (GlcNAc-1-P), which is converted into UDP-GlcNAc by the transfer of uridine 5-monophosphate (from uridine 5-triphosphate), a reaction catalyzed by the N-terminal domain. This Bacillus cytotoxicus (strain DSM 22905 / CIP 110041 / 391-98 / NVH 391-98) protein is Bifunctional protein GlmU.